Reading from the N-terminus, the 775-residue chain is Kinesin-like protein KIF3B (775 aa).

The Kinesin motor domain occupies 9-341 (SVKVVVRCRP…LRYANRAKNI (333 aa)). ATP is bound at residue 97–104 (GQTGTGKT). The segment at 372–419 (KRSGRKRRRRRRRRVGEGGEEFEDGEDEEDDDDDDEDEEEGVDADKNI) is disordered. Residues 374-385 (SGRKRRRRRRRR) show a composition bias toward basic residues. Acidic residues predominate over residues 389–413 (GGEEFEDGEDEEDDDDDDEDEEEGV). The stretch at 501-591 (LELKRQEIAE…QNELTRELKL (91 aa)) forms a coiled coil. The segment at 716-775 (FHASLGSSPGLSASAAGFSKKPKSGRPKTGKKVSTPTSAHSPLSGSGSPLYPQSRGLVPK) is disordered. A compositionally biased stretch (low complexity) spans 718–734 (ASLGSSPGLSASAAGFS). Residues 735–746 (KKPKSGRPKTGK) are compositionally biased toward basic residues. Low complexity predominate over residues 756–765 (SPLSGSGSPL).

Belongs to the TRAFAC class myosin-kinesin ATPase superfamily. Kinesin family. As to quaternary structure, heterodimer of KIF3A and KIF3B. KIF3A/KIF3B heterodimer interacts with KIFAP3 forming a heterotrimeric (KIF3A/KIF3B/KIFAP3) complex.

Its subcellular location is the cytoplasm. It localises to the cytoskeleton. It is found in the cell projection. The protein localises to the cilium. The protein resides in the dendritic spine. Microtubule-based molecular motor that transport intracellular cargos, such as vesicles, organelles and protein complexes. Uses ATP hydrolysis to generate force to bind and move along the microtubule. Plays a role in cilia formation. Required for photoreceptor development. The polypeptide is Kinesin-like protein KIF3B (Danio rerio (Zebrafish)).